The sequence spans 267 residues: tRNA pseudouridine synthase A (267 aa).

Aspartate 51 (nucleophile) is an active-site residue. Residue tyrosine 109 participates in substrate binding.

This sequence belongs to the tRNA pseudouridine synthase TruA family. Homodimer.

It catalyses the reaction uridine(38/39/40) in tRNA = pseudouridine(38/39/40) in tRNA. In terms of biological role, formation of pseudouridine at positions 38, 39 and 40 in the anticodon stem and loop of transfer RNAs. The chain is tRNA pseudouridine synthase A from Staphylococcus carnosus (strain TM300).